The following is a 269-amino-acid chain: Phycobilisome 37.5 kDa linker polypeptide, phycocyanin-associated, rod (269 aa).

The PBS-linker domain occupies 2-177 (TSSTAARQLG…IYRGYANSDR (176 aa)). Residues 217–269 (GQLYRVRVIQADRGRTTQIRRSIQEYLVSYDQLSPTLQRLNQRGSRVVNISPA) enclose the CpcD-like domain.

The protein belongs to the phycobilisome linker protein family.

It is found in the cellular thylakoid membrane. In terms of biological role, rod linker protein, associated with phycocyanin. Linker polypeptides determine the state of aggregation and the location of the disk-shaped phycobiliprotein units within the phycobilisome and modulate their spectroscopic properties in order to mediate a directed and optimal energy transfer. The sequence is that of Phycobilisome 37.5 kDa linker polypeptide, phycocyanin-associated, rod (cpcH2) from Microchaete diplosiphon (Fremyella diplosiphon).